The sequence spans 192 residues: Peptidyl-tRNA hydrolase (192 aa).

Position 18 (Tyr-18) interacts with tRNA. The active-site Proton acceptor is the His-23. Residues Phe-69, Asn-71, and Asn-117 each coordinate tRNA.

The protein belongs to the PTH family. Monomer.

It is found in the cytoplasm. The catalysed reaction is an N-acyl-L-alpha-aminoacyl-tRNA + H2O = an N-acyl-L-amino acid + a tRNA + H(+). Hydrolyzes ribosome-free peptidyl-tRNAs (with 1 or more amino acids incorporated), which drop off the ribosome during protein synthesis, or as a result of ribosome stalling. In terms of biological role, catalyzes the release of premature peptidyl moieties from peptidyl-tRNA molecules trapped in stalled 50S ribosomal subunits, and thus maintains levels of free tRNAs and 50S ribosomes. This Neisseria meningitidis serogroup B (strain ATCC BAA-335 / MC58) protein is Peptidyl-tRNA hydrolase.